We begin with the raw amino-acid sequence, 389 residues long: Succinate--CoA ligase [ADP-forming] subunit beta (389 aa).

Residues 9–244 (KQLLAEYGIP…KTQEDETEVT (236 aa)) form the ATP-grasp domain. Residues lysine 46, 53 to 55 (GRG), glycine 102, and glutamate 107 each bind ATP. Mg(2+)-binding residues include asparagine 199 and aspartate 213. Residues asparagine 264 and 321-323 (GIV) contribute to the substrate site.

It belongs to the succinate/malate CoA ligase beta subunit family. As to quaternary structure, heterotetramer of two alpha and two beta subunits. Mg(2+) is required as a cofactor.

The catalysed reaction is succinate + ATP + CoA = succinyl-CoA + ADP + phosphate. It catalyses the reaction GTP + succinate + CoA = succinyl-CoA + GDP + phosphate. The protein operates within carbohydrate metabolism; tricarboxylic acid cycle; succinate from succinyl-CoA (ligase route): step 1/1. Functionally, succinyl-CoA synthetase functions in the citric acid cycle (TCA), coupling the hydrolysis of succinyl-CoA to the synthesis of either ATP or GTP and thus represents the only step of substrate-level phosphorylation in the TCA. The beta subunit provides nucleotide specificity of the enzyme and binds the substrate succinate, while the binding sites for coenzyme A and phosphate are found in the alpha subunit. The sequence is that of Succinate--CoA ligase [ADP-forming] subunit beta from Xanthomonas oryzae pv. oryzae (strain MAFF 311018).